Here is a 391-residue protein sequence, read N- to C-terminus: Elongation factor Tu 1 (391 aa).

Positions 10 to 201 (KLHVNIGTIG…EVDRYIPTPE (192 aa)) constitute a tr-type G domain. The tract at residues 19–26 (GHVDHGKT) is G1. Residue 19–26 (GHVDHGKT) coordinates GTP. Residue Thr-26 participates in Mg(2+) binding. The interval 55 to 59 (GITIS) is G2. The segment at 76–79 (DCPG) is G3. GTP is bound by residues 76–80 (DCPGH) and 131–134 (NKVD). The tract at residues 131 to 134 (NKVD) is G4. The segment at 169–171 (SAL) is G5.

Belongs to the TRAFAC class translation factor GTPase superfamily. Classic translation factor GTPase family. EF-Tu/EF-1A subfamily. Monomer.

The protein resides in the cytoplasm. The enzyme catalyses GTP + H2O = GDP + phosphate + H(+). GTP hydrolase that promotes the GTP-dependent binding of aminoacyl-tRNA to the A-site of ribosomes during protein biosynthesis. The polypeptide is Elongation factor Tu 1 (Bartonella bacilliformis (strain ATCC 35685 / KC583 / Herrer 020/F12,63)).